We begin with the raw amino-acid sequence, 222 residues long: Probable transaldolase (222 aa).

The active-site Schiff-base intermediate with substrate is the K91.

The protein belongs to the transaldolase family. Type 3B subfamily.

Its subcellular location is the cytoplasm. It catalyses the reaction D-sedoheptulose 7-phosphate + D-glyceraldehyde 3-phosphate = D-erythrose 4-phosphate + beta-D-fructose 6-phosphate. The protein operates within carbohydrate degradation; pentose phosphate pathway; D-glyceraldehyde 3-phosphate and beta-D-fructose 6-phosphate from D-ribose 5-phosphate and D-xylulose 5-phosphate (non-oxidative stage): step 2/3. Functionally, transaldolase is important for the balance of metabolites in the pentose-phosphate pathway. The sequence is that of Probable transaldolase from Chlorobaculum parvum (strain DSM 263 / NCIMB 8327) (Chlorobium vibrioforme subsp. thiosulfatophilum).